Here is a 357-residue protein sequence, read N- to C-terminus: Alanine racemase (357 aa).

Lys33 (proton acceptor; specific for D-alanine) is an active-site residue. At Lys33 the chain carries N6-(pyridoxal phosphate)lysine. Arg129 is a substrate binding site. The Proton acceptor; specific for L-alanine role is filled by Tyr253. Met301 is a substrate binding site.

This sequence belongs to the alanine racemase family. In terms of assembly, homodimer. The cofactor is pyridoxal 5'-phosphate.

The enzyme catalyses L-alanine = D-alanine. Its pathway is amino-acid biosynthesis; D-alanine biosynthesis; D-alanine from L-alanine: step 1/1. Functionally, catalyzes the interconversion of L-alanine and D-alanine. Is highly specific for alanine as substrate. May serve both anabolic and catabolic purposes. The chain is Alanine racemase from Pseudomonas taetrolens.